The following is a 201-amino-acid chain: MSKVLVLKSSILAGYSQSGQLSDYFVEQWREKHPADAITVRDLAANPVPVLDGELVGALRPSDAPLTPRQQDALALSDELIAELQAHDVIVIAAPMYNFNIPTQLKNYFDLVARAGVTFRYTEKGPEGLVTGKRAVILSSRGGIHKDTPTDLIAPYLKVFLGFIGITDVNFVFAEGIAYGPEVAAKAQSDAKAAIDSVVAA.

FMN is bound by residues serine 10, 16–18, 96–99, and 140–143; these read SQS, MYNF, and SRGG.

The protein belongs to the azoreductase type 1 family. Homodimer. The cofactor is FMN.

The catalysed reaction is 2 a quinone + NADH + H(+) = 2 a 1,4-benzosemiquinone + NAD(+). The enzyme catalyses N,N-dimethyl-1,4-phenylenediamine + anthranilate + 2 NAD(+) = 2-(4-dimethylaminophenyl)diazenylbenzoate + 2 NADH + 2 H(+). Functionally, quinone reductase that provides resistance to thiol-specific stress caused by electrophilic quinones. In terms of biological role, also exhibits azoreductase activity. Catalyzes the reductive cleavage of the azo bond in aromatic azo compounds to the corresponding amines. This chain is FMN-dependent NADH:quinone oxidoreductase, found in Citrobacter koseri (strain ATCC BAA-895 / CDC 4225-83 / SGSC4696).